We begin with the raw amino-acid sequence, 124 residues long: Ribosome-binding factor A (124 aa).

The protein belongs to the RbfA family. As to quaternary structure, monomer. Binds 30S ribosomal subunits, but not 50S ribosomal subunits or 70S ribosomes.

Its subcellular location is the cytoplasm. Its function is as follows. One of several proteins that assist in the late maturation steps of the functional core of the 30S ribosomal subunit. Associates with free 30S ribosomal subunits (but not with 30S subunits that are part of 70S ribosomes or polysomes). Required for efficient processing of 16S rRNA. May interact with the 5'-terminal helix region of 16S rRNA. In Buchnera aphidicola subsp. Schizaphis graminum (strain Sg), this protein is Ribosome-binding factor A.